The primary structure comprises 310 residues: Ornithine carbamoyltransferase (310 aa).

Carbamoyl phosphate-binding positions include 56–59, glutamine 83, arginine 107, and 134–137; these read STRT and HPCQ. L-ornithine-binding positions include asparagine 165, aspartate 229, and 233–234; that span reads SM. Residues 269–270 and arginine 297 each bind carbamoyl phosphate; that span reads CL.

Belongs to the aspartate/ornithine carbamoyltransferase superfamily. OTCase family.

The protein resides in the cytoplasm. It carries out the reaction carbamoyl phosphate + L-ornithine = L-citrulline + phosphate + H(+). It functions in the pathway amino-acid biosynthesis; L-arginine biosynthesis; L-arginine from L-ornithine and carbamoyl phosphate: step 1/3. Its function is as follows. Reversibly catalyzes the transfer of the carbamoyl group from carbamoyl phosphate (CP) to the N(epsilon) atom of ornithine (ORN) to produce L-citrulline. The sequence is that of Ornithine carbamoyltransferase from Symbiobacterium thermophilum (strain DSM 24528 / JCM 14929 / IAM 14863 / T).